The sequence spans 299 residues: Probable transport accessory protein MmpS3 (299 aa).

A disordered region spans residues 1 to 72 (MSGPNPPGRE…EHVTGGPYVP (72 aa)). Residues 101–121 (VVGVAAIIAAVALVVSVSLLV) form a helical membrane-spanning segment. Residues 128-139 (KLATGDTTSSAP) show a composition bias toward polar residues. A disordered region spans residues 128–213 (KLATGDTTSS…TTTTPTGPRQ (86 aa)). Over residues 150 to 163 (PAPPPPPPAPPPTT) the composition is skewed to pro residues. The span at 164 to 176 (EIPTATETQTVTV) shows a compositional bias: low complexity. Residues 177–193 (TPPPPPPPATTTAPPPA) show a composition bias toward pro residues.

Belongs to the MmpS family.

It localises to the cell membrane. In Mycobacterium tuberculosis (strain CDC 1551 / Oshkosh), this protein is Probable transport accessory protein MmpS3 (mmpS3).